A 159-amino-acid chain; its full sequence is Ribosomal RNA large subunit methyltransferase H (159 aa).

Residues Leu-76, Gly-108, and 127 to 132 (FGQLTL) contribute to the S-adenosyl-L-methionine site.

It belongs to the RNA methyltransferase RlmH family. In terms of assembly, homodimer.

Its subcellular location is the cytoplasm. It carries out the reaction pseudouridine(1915) in 23S rRNA + S-adenosyl-L-methionine = N(3)-methylpseudouridine(1915) in 23S rRNA + S-adenosyl-L-homocysteine + H(+). In terms of biological role, specifically methylates the pseudouridine at position 1915 (m3Psi1915) in 23S rRNA. This Streptococcus gordonii (strain Challis / ATCC 35105 / BCRC 15272 / CH1 / DL1 / V288) protein is Ribosomal RNA large subunit methyltransferase H.